The sequence spans 214 residues: Phosphatidylserine decarboxylase proenzyme (214 aa).

Ser182 (schiff-base intermediate with substrate; via pyruvic acid) is an active-site residue. Ser182 is subject to Pyruvic acid (Ser); by autocatalysis.

Belongs to the phosphatidylserine decarboxylase family. PSD-A subfamily. Heterodimer of a large membrane-associated beta subunit and a small pyruvoyl-containing alpha subunit. Requires pyruvate as cofactor. Post-translationally, is synthesized initially as an inactive proenzyme. Formation of the active enzyme involves a self-maturation process in which the active site pyruvoyl group is generated from an internal serine residue via an autocatalytic post-translational modification. Two non-identical subunits are generated from the proenzyme in this reaction, and the pyruvate is formed at the N-terminus of the alpha chain, which is derived from the carboxyl end of the proenzyme. The post-translation cleavage follows an unusual pathway, termed non-hydrolytic serinolysis, in which the side chain hydroxyl group of the serine supplies its oxygen atom to form the C-terminus of the beta chain, while the remainder of the serine residue undergoes an oxidative deamination to produce ammonia and the pyruvoyl prosthetic group on the alpha chain.

It localises to the cell membrane. It catalyses the reaction a 1,2-diacyl-sn-glycero-3-phospho-L-serine + H(+) = a 1,2-diacyl-sn-glycero-3-phosphoethanolamine + CO2. The protein operates within phospholipid metabolism; phosphatidylethanolamine biosynthesis; phosphatidylethanolamine from CDP-diacylglycerol: step 2/2. Functionally, catalyzes the formation of phosphatidylethanolamine (PtdEtn) from phosphatidylserine (PtdSer). This chain is Phosphatidylserine decarboxylase proenzyme, found in Burkholderia multivorans (strain ATCC 17616 / 249).